The following is a 339-amino-acid chain: Phenylalanine--tRNA ligase alpha subunit (339 aa).

Residue Glu247 participates in Mg(2+) binding.

It belongs to the class-II aminoacyl-tRNA synthetase family. Phe-tRNA synthetase alpha subunit type 1 subfamily. Tetramer of two alpha and two beta subunits. Mg(2+) serves as cofactor.

The protein resides in the cytoplasm. It carries out the reaction tRNA(Phe) + L-phenylalanine + ATP = L-phenylalanyl-tRNA(Phe) + AMP + diphosphate + H(+). This Deinococcus deserti (strain DSM 17065 / CIP 109153 / LMG 22923 / VCD115) protein is Phenylalanine--tRNA ligase alpha subunit.